The chain runs to 42 residues: Photosystem I reaction center subunit IX (42 aa).

A helical membrane pass occupies residues 7 to 27 (YLSTAPVLATLWFGFLAGLLI).

This sequence belongs to the PsaJ family.

Its subcellular location is the plastid. It is found in the chloroplast thylakoid membrane. May help in the organization of the PsaE and PsaF subunits. In Anthoceros angustus (Hornwort), this protein is Photosystem I reaction center subunit IX.